Reading from the N-terminus, the 177-residue chain is ATP synthase subunit delta 1 (177 aa).

Belongs to the ATPase delta chain family. As to quaternary structure, F-type ATPases have 2 components, F(1) - the catalytic core - and F(0) - the membrane proton channel. F(1) has five subunits: alpha(3), beta(3), gamma(1), delta(1), epsilon(1). F(0) has three main subunits: a(1), b(2) and c(10-14). The alpha and beta chains form an alternating ring which encloses part of the gamma chain. F(1) is attached to F(0) by a central stalk formed by the gamma and epsilon chains, while a peripheral stalk is formed by the delta and b chains.

It is found in the cell inner membrane. F(1)F(0) ATP synthase produces ATP from ADP in the presence of a proton or sodium gradient. F-type ATPases consist of two structural domains, F(1) containing the extramembraneous catalytic core and F(0) containing the membrane proton channel, linked together by a central stalk and a peripheral stalk. During catalysis, ATP synthesis in the catalytic domain of F(1) is coupled via a rotary mechanism of the central stalk subunits to proton translocation. Its function is as follows. This protein is part of the stalk that links CF(0) to CF(1). It either transmits conformational changes from CF(0) to CF(1) or is implicated in proton conduction. This Vibrio atlanticus (strain LGP32) (Vibrio splendidus (strain Mel32)) protein is ATP synthase subunit delta 1.